Here is a 291-residue protein sequence, read N- to C-terminus: 2-dehydro-3-deoxyphosphooctonate aldolase 2 (291 aa).

Ala2 carries the N-acetylalanine modification.

This sequence belongs to the KdsA family. As to expression, expressed in roots, apical meristem, emerging leaves, hydathodes of young leaves, styles of mature flowers and funicules of mature siliques.

It localises to the cytoplasm. The catalysed reaction is D-arabinose 5-phosphate + phosphoenolpyruvate + H2O = 3-deoxy-alpha-D-manno-2-octulosonate-8-phosphate + phosphate. Its function is as follows. Catalyzes the stereospecific condensation of D-arabinose 5-phosphate and phosphoenolpyruvate to form 3-deoxy-D-manno-octulosonate 8-phosphate (KDO-8-phosphate) and inorganic phosphate. Involved in the biosynthesis of 3-deoxy-D-manno-octulosonate (KDO) which is an indispensable component of rhamnogalacturonan II (RG-II), a structurally complex pectic polysaccharide of the primary cell wall. RG-II is essential for the cell wall integrity of rapidly growing tissues and pollen tube growth and elongation. The chain is 2-dehydro-3-deoxyphosphooctonate aldolase 2 (KDSA2) from Arabidopsis thaliana (Mouse-ear cress).